Here is an 824-residue protein sequence, read N- to C-terminus: Protein bicaudal D homolog 2 (824 aa).

S2 bears the N-acetylserine mark. Positions 20–269 (EWLRAEVKRL…ELSHYMSIND (250 aa)) form a coiled coil. The segment at 25–398 (EVKRLSHELA…RLTENLSALR (374 aa)) is interacts with DYNLL1, DYNC1H1, DYNC1I2, DCTN1 and DCTN2. Phosphoserine occurs at positions 190, 224, and 318. A disordered region spans residues 311–330 (LPLDNKTSTPKKEGLAPPSP). Residue T319 is modified to Phosphothreonine. Residues 334–599 (SDLLSELNIS…LLAPEAGRAD (266 aa)) form an interaction with KIF5A region. Residues 338 to 537 (SELNISEIQK…VTFSEELANL (200 aa)) are a coiled coil. Phosphoserine is present on residues S343 and S395. 3 disordered regions span residues 398–425 (RRLQ…GDYY), 559–622 (EGQG…DPRR), and 804–824 (EQTR…TPSL). Residues 402 to 422 (ASKERQTALDNEKDRDSHEDG) are compositionally biased toward basic and acidic residues. A phosphoserine mark is found at S568, S574, and S582. The segment at 590–824 (LLAPEAGRAD…PKTKPATPSL (235 aa)) is interaction with RANBP2. T602 is subject to Phosphothreonine. Residues 604–618 (DSSPSPGSSLPSPLS) show a composition bias toward low complexity. Positions 666–808 (DKDKEALMEE…LELDHEQTRR (143 aa)) form a coiled coil. The tract at residues 666–814 (DKDKEALMEE…QTRRGRAKAA (149 aa)) is interacts with RAB6A. The residue at position 821 (T821) is a Phosphothreonine. Residue S823 is modified to Phosphoserine.

It belongs to the BicD family. As to quaternary structure, part of a tripartite complex with dynein and dynactin, acts an adapter linking the dynein motor complex and dynactin. Interacts with CPNE4 (via VWFA domain). Interacts with RAB6A. Interacts with NEK9. Interacts with DNAI1. Interacts with DYNC1H1. Interacts with RANBP2. Binds preferentially to tyrosinated microtubules than to detyrosinated microtubules. Interacts with DYNLL1, DYNC1I2; DCTN1, DCTN2 and KIF5A. Interacts with KIF1C. Post-translationally, phosphorylated by NEK9 in vitro. In terms of tissue distribution, ubiquitous.

It localises to the golgi apparatus. The protein localises to the cytoplasm. Its subcellular location is the cytoskeleton. It is found in the nucleus envelope. The protein resides in the nucleus. It localises to the nuclear pore complex. Acts as an adapter protein linking the dynein motor complex to various cargos and converts dynein from a non-processive to a highly processive motor in the presence of dynactin. Facilitates and stabilizes the interaction between dynein and dynactin and activates dynein processivity (the ability to move along a microtubule for a long distance without falling off the track). Facilitates the binding of RAB6A to the Golgi by stabilizing its GTP-bound form. Regulates coat complex coatomer protein I (COPI)-independent Golgi-endoplasmic reticulum transport via its interaction with RAB6A and recruitment of the dynein-dynactin motor complex. Contributes to nuclear and centrosomal positioning prior to mitotic entry through regulation of both dynein and kinesin-1. During G2 phase of the cell cycle, associates with RANBP2 at the nuclear pores and recruits dynein and dynactin to the nuclear envelope to ensure proper positioning of the nucleus relative to centrosomes prior to the onset of mitosis. The chain is Protein bicaudal D homolog 2 from Homo sapiens (Human).